The following is a 391-amino-acid chain: GDP-mannose transporter (391 aa).

The segment covering methionine 1–methionine 11 has biased composition (basic and acidic residues). A disordered region spans residues methionine 1–serine 28. Residues methionine 1 to asparagine 44 lie on the Cytoplasmic side of the membrane. The chain crosses the membrane as a helical span at residues valine 45–valine 65. At threonine 66–asparagine 75 the chain is on the lumenal side. Residues tryptophan 76–isoleucine 96 traverse the membrane as a helical segment. The Cytoplasmic segment spans residues cysteine 97–lysine 115. The chain crosses the membrane as a helical span at residues threonine 116–leucine 138. The Lumenal portion of the chain corresponds to serine 139–proline 141. A helical transmembrane segment spans residues valine 142–glycine 164. Over serine 165–alanine 170 the chain is Cytoplasmic. Residues leucine 171–leucine 193 traverse the membrane as a helical segment. Residues tyrosine 194–serine 209 lie on the Lumenal side of the membrane. A helical transmembrane segment spans residues threonine 210 to leucine 230. Over serine 231–aspartate 245 the chain is Cytoplasmic. Residues threonine 246–glutamate 266 form a helical membrane-spanning segment. Residues asparagine 267 and asparagine 272 are each glycosylated (N-linked (GlcNAc...) asparagine). At asparagine 267–asparagine 284 the chain is on the lumenal side. Residues leucine 285–tryptophan 305 traverse the membrane as a helical segment. Residues cysteine 306–threonine 313 are Cytoplasmic-facing. The helical transmembrane segment at threonine 314–alanine 336 threads the bilayer. Over proline 337 to threonine 339 the chain is Lumenal. A helical membrane pass occupies residues phenylalanine 340–alanine 359. At lysine 360–alanine 391 the chain is on the cytoplasmic side. Residues serine 369–alanine 391 form a disordered region.

This sequence belongs to the TPT transporter family. SLC35D subfamily. In terms of assembly, homooligomer.

Its subcellular location is the golgi apparatus membrane. It localises to the cytoplasmic vesicle membrane. The protein localises to the endoplasmic reticulum membrane. Functionally, involved in the import of GDP-mannose from the cytoplasm into the Golgi lumen. The sequence is that of GDP-mannose transporter (vrg4) from Sclerotinia sclerotiorum (strain ATCC 18683 / 1980 / Ss-1) (White mold).